Reading from the N-terminus, the 163-residue chain is Cytochrome b6-f complex subunit 4 (163 aa).

The next 3 membrane-spanning stretches (helical) occupy residues 36 to 56 (LLYI…GLAV), 95 to 115 (LLGV…PFLE), and 131 to 151 (TVFL…TLPI).

This sequence belongs to the cytochrome b family. PetD subfamily. In terms of assembly, the 4 large subunits of the cytochrome b6-f complex are cytochrome b6, subunit IV (17 kDa polypeptide, petD), cytochrome f and the Rieske protein, while the 4 small subunits are petG, petL, petM and petN. The complex functions as a dimer.

The protein resides in the plastid. The protein localises to the chloroplast thylakoid membrane. Its function is as follows. Component of the cytochrome b6-f complex, which mediates electron transfer between photosystem II (PSII) and photosystem I (PSI), cyclic electron flow around PSI, and state transitions. This chain is Cytochrome b6-f complex subunit 4, found in Phalaenopsis aphrodite subsp. formosana (Moth orchid).